The sequence spans 437 residues: Succinate--CoA ligase [ADP-forming] subunit beta, hydrogenosomal (437 aa).

Residues 1-27 (MLANVTRSTSKAAPALASIAQTAQKRF) constitute a hydrogenosome transit peptide. The 243-residue stretch at 36 to 278 (MNLLHEYNVN…TTQEDPREVA (243 aa)) folds into the ATP-grasp domain. ATP is bound by residues K73, 80 to 82 (GRG), and E141. Mg(2+) is bound by residues N233 and D247. Substrate-binding positions include N299 and 356–358 (GIM).

It belongs to the succinate/malate CoA ligase beta subunit family. As to quaternary structure, heterodimer of an alpha and a beta subunit. Mg(2+) serves as cofactor.

The protein localises to the hydrogenosome. The catalysed reaction is succinate + ATP + CoA = succinyl-CoA + ADP + phosphate. It participates in carbohydrate metabolism; tricarboxylic acid cycle; succinate from succinyl-CoA (ligase route): step 1/1. Its function is as follows. Succinyl-CoA synthetase functions in the citric acid cycle (TCA), coupling the hydrolysis of succinyl-CoA to the synthesis of ATP and thus represents the only step of substrate-level phosphorylation in the TCA. The beta subunit provides nucleotide specificity of the enzyme and binds the substrate succinate, while the binding sites for coenzyme A and phosphate are found in the alpha subunit. The polypeptide is Succinate--CoA ligase [ADP-forming] subunit beta, hydrogenosomal (Neocallimastix frontalis (Rumen fungus)).